Here is a 60-residue protein sequence, read N- to C-terminus: DNA-directed RNA polymerase subunit Rpo6 (60 aa).

The protein belongs to the archaeal Rpo6/eukaryotic RPB6 RNA polymerase subunit family. As to quaternary structure, part of the RNA polymerase complex.

It is found in the cytoplasm. It carries out the reaction RNA(n) + a ribonucleoside 5'-triphosphate = RNA(n+1) + diphosphate. In terms of biological role, DNA-dependent RNA polymerase (RNAP) catalyzes the transcription of DNA into RNA using the four ribonucleoside triphosphates as substrates. This is DNA-directed RNA polymerase subunit Rpo6 from Methanosarcina acetivorans (strain ATCC 35395 / DSM 2834 / JCM 12185 / C2A).